The following is a 379-amino-acid chain: DnaJ homolog subfamily B member 14 (379 aa).

Residues 1–244 (MEGNRDEAEK…GHEREEERAD (244 aa)) lie on the Cytoplasmic side of the membrane. Positions 56 to 90 (TAGSSTHCRKPPGSSDQSKPSCGKDGTSGAGEGGK) are disordered. In terms of domain architecture, J spans 108 to 172 (NYYEVLGVTK…EKRKQYDLTG (65 aa)). Residues 245 to 265 (GGFSVFIQLMPIIVLILVSLL) traverse the membrane as a helical segment. Topologically, residues 266–379 (SQLMVSNPPY…ERLTSLYKGG (114 aa)) are lumenal.

This sequence belongs to the DnaJ family. DNAJB12/DNAJB14 subfamily. As to quaternary structure, interacts (via J domain) with HSPA8/Hsc70. Forms a multiprotein complex, at least composed of DNAJB12, DNAJB14, HSPA8/Hsc70 and SGTA; interaction with DNAJB14 and HSPA8/Hsc70 is direct.

It localises to the endoplasmic reticulum membrane. The protein localises to the nucleus membrane. Its function is as follows. Acts as a co-chaperone with HSPA8/Hsc70; required to promote protein folding and trafficking, prevent aggregation of client proteins, and promote unfolded proteins to endoplasmic reticulum-associated degradation (ERAD) pathway. Acts by determining HSPA8/Hsc70's ATPase and polypeptide-binding activities. Can also act independently of HSPA8/Hsc70: together with DNAJB12, acts as a chaperone that promotes maturation of potassium channels KCND2 and KCNH2 by stabilizing nascent channel subunits and assembling them into tetramers. While stabilization of nascent channel proteins is dependent on HSPA8/Hsc70, the process of oligomerization of channel subunits is independent of HSPA8/Hsc70. When overexpressed, forms membranous structures together with DNAJB12 and HSPA8/Hsc70 within the nucleus; the role of these structures, named DJANGOs, is still unclear. The protein is DnaJ homolog subfamily B member 14 of Mus musculus (Mouse).